Here is a 142-residue protein sequence, read N- to C-terminus: Large ribosomal subunit protein uL11 (142 aa).

Belongs to the universal ribosomal protein uL11 family. Part of the ribosomal stalk of the 50S ribosomal subunit. Interacts with L10 and the large rRNA to form the base of the stalk. L10 forms an elongated spine to which L12 dimers bind in a sequential fashion forming a multimeric L10(L12)X complex. One or more lysine residues are methylated.

Forms part of the ribosomal stalk which helps the ribosome interact with GTP-bound translation factors. In Pseudoalteromonas translucida (strain TAC 125), this protein is Large ribosomal subunit protein uL11.